Here is a 270-residue protein sequence, read N- to C-terminus: Putative pyruvate, phosphate dikinase regulatory protein (270 aa).

150–157 is a binding site for ADP; sequence GPSRTSKS.

Belongs to the pyruvate, phosphate/water dikinase regulatory protein family. PDRP subfamily.

The enzyme catalyses N(tele)-phospho-L-histidyl/L-threonyl-[pyruvate, phosphate dikinase] + ADP = N(tele)-phospho-L-histidyl/O-phospho-L-threonyl-[pyruvate, phosphate dikinase] + AMP + H(+). The catalysed reaction is N(tele)-phospho-L-histidyl/O-phospho-L-threonyl-[pyruvate, phosphate dikinase] + phosphate + H(+) = N(tele)-phospho-L-histidyl/L-threonyl-[pyruvate, phosphate dikinase] + diphosphate. In terms of biological role, bifunctional serine/threonine kinase and phosphorylase involved in the regulation of the pyruvate, phosphate dikinase (PPDK) by catalyzing its phosphorylation/dephosphorylation. The sequence is that of Putative pyruvate, phosphate dikinase regulatory protein from Neorickettsia sennetsu (strain ATCC VR-367 / Miyayama) (Ehrlichia sennetsu).